We begin with the raw amino-acid sequence, 559 residues long: MEGEERKGEAGPGPGRLSALQEQLIWALLGSGLSREVLVHALGELERERVTPGAEKGDRGDGESSEEGEMDFPPPIFQELEALAPEEAARQRALVDQLLQEDPWRVAKLVKSYMQQHNLPQREVVESIGLNQSHLSQHLNKGTPMKNQKRAALYSWYVRKQGEISQQFTNARHALGSGEEQGEDVRKGRRNRFKWGPASQQILFHAYERQRNPSKEEREGLVEECNRAECLQRGVSPSQLAGLGSNLVTEVRVYNWFANRRKEEAFRHKLALDMPYNSQSASSTNHTLSHSPEQGMKYSQQITCDNLGSSRGHNGDRGLGGRLASPIQLEPSHTLLETHHHKPVSGGGPLPPVSTLTSLHSLSASPAPHHGLIMTSLPSVMSLGESSLLIGQTVPVINNVGGGFTTLQPISFQQQLHSTSQQQLTQQFQSHMGHHHSPFMATMAQLPCHMYSKSDMSHYPPSSLLSQAMVITDSSSLGTLTSLTTVRQILTTDPEEQTDQPIQEDSLHLQSPSPVPVSSGNLQLYPPSQSSESHPPHRLSSSPADINSYIPAQMVSTAQ.

In terms of domain architecture, HNF-p1 spans 13–44 (GPGRLSALQEQLIWALLGSGLSREVLVHALGE). A dimerization region spans residues 14–43 (PGRLSALQEQLIWALLGSGLSREVLVHALG). Basic and acidic residues predominate over residues 49–62 (RVTPGAEKGDRGDG). Positions 49–73 (RVTPGAEKGDRGDGESSEEGEMDFP) are disordered. In terms of domain architecture, POU-specific atypical spans 78-173 (QELEALAPEE…ISQQFTNARH (96 aa)). Interaction with DNA stretches follow at residues 121–123 (QRE), 134–140 (HLSQHLN), 146–149 (KNQK), 192–195 (RFKW), 252–254 (RVY), and 259–262 (NRRK). Residues 186-194 (RKGRRNRFK) carry the Nuclear localization signal motif. A DNA-binding region (homeobox; HNF1-type) is located at residues 188 to 268 (GRRNRFKWGP…NRRKEEAFRH (81 aa)). A disordered region spans residues 492 to 559 (TDPEEQTDQP…IPAQMVSTAQ (68 aa)). A compositionally biased stretch (polar residues) spans 499–522 (DQPIQEDSLHLQSPSPVPVSSGNL).

The protein belongs to the HNF1 homeobox family. As to quaternary structure, binds DNA as a dimer. As to expression, expressed in liver, intestine, spleen and kidney.

It is found in the nucleus. In terms of biological role, transcriptional activator that regulates the tissue specific expression of multiple genes, especially in pancreas and liver. Binds to the promoter of the albumin gene. This chain is Hepatocyte nuclear factor 1-alpha (hnf1a), found in Salmo salar (Atlantic salmon).